Consider the following 354-residue polypeptide: Chorismate synthase (354 aa).

NADP(+) is bound by residues arginine 48 and arginine 54. Residues 125-127 (RSS), 238-239 (NA), glycine 278, 293-297 (KPTSS), and arginine 319 contribute to the FMN site.

It belongs to the chorismate synthase family. Homotetramer. Requires FMNH2 as cofactor.

It carries out the reaction 5-O-(1-carboxyvinyl)-3-phosphoshikimate = chorismate + phosphate. It functions in the pathway metabolic intermediate biosynthesis; chorismate biosynthesis; chorismate from D-erythrose 4-phosphate and phosphoenolpyruvate: step 7/7. Functionally, catalyzes the anti-1,4-elimination of the C-3 phosphate and the C-6 proR hydrogen from 5-enolpyruvylshikimate-3-phosphate (EPSP) to yield chorismate, which is the branch point compound that serves as the starting substrate for the three terminal pathways of aromatic amino acid biosynthesis. This reaction introduces a second double bond into the aromatic ring system. This is Chorismate synthase from Buchnera aphidicola subsp. Acyrthosiphon pisum (strain 5A).